Reading from the N-terminus, the 304-residue chain is N-acetyl-D-glucosamine kinase (304 aa).

Residues 4-11 (GFDIGGTK) and 133-140 (GFGGGLIF) contribute to the ATP site. 4 residues coordinate Zn(2+): H157, C178, C180, and C185.

This sequence belongs to the ROK (NagC/XylR) family. NagK subfamily.

It carries out the reaction N-acetyl-D-glucosamine + ATP = N-acetyl-D-glucosamine 6-phosphate + ADP + H(+). It functions in the pathway cell wall biogenesis; peptidoglycan recycling. Functionally, catalyzes the phosphorylation of N-acetyl-D-glucosamine (GlcNAc) derived from cell-wall degradation, yielding GlcNAc-6-P. The sequence is that of N-acetyl-D-glucosamine kinase from Mannheimia succiniciproducens (strain KCTC 0769BP / MBEL55E).